Consider the following 1429-residue polypeptide: Protein lin-12 (1429 aa).

An N-terminal signal peptide occupies residues 1–15 (MRIPTICFLFLLISL). At 16–908 (SKSLHIGSCL…GNNTGFLSWN (893 aa)) the chain is on the extracellular side. EGF-like domains lie at 20-61 (HIGS…EYCE) and 114-150 (TQGWCYPSVCMNGGQCIGAGNRAKCACPDGFKGERCE). Disulfide bonds link Cys24–Cys35, Cys29–Cys49, Cys51–Cys60, Cys118–Cys129, Cys123–Cys138, Cys140–Cys149, Cys156–Cys169, Cys163–Cys178, and Cys180–Cys189. Asn41 is a glycosylation site (N-linked (GlcNAc...) asparagine). The 39-residue stretch at 152-190 (DVNECEENKNACGNRSTCMNTLGTYICVCPQGFLPPDCL) folds into the EGF-like 3; calcium-binding domain. Asn165 carries an N-linked (GlcNAc...) asparagine glycan. An N-linked (GlcNAc...) asparagine glycan is attached at Asn194. EGF-like domains follow at residues 201–246 (KQPV…STCE), 250–285 (KEDSCASNPCSHGVCISFSGGFQCICDDGYSGSYCQ), 287–323 (GKDNCVNNKCEAGSKCINGVNSYFCDCPPERTGPYCE), and 323–363 (EKMD…ILCE). 30 disulfide bridges follow: Cys205-Cys227, Cys221-Cys234, Cys236-Cys245, Cys254-Cys264, Cys259-Cys273, Cys275-Cys284, Cys291-Cys302, Cys296-Cys311, Cys313-Cys322, Cys327-Cys339, Cys334-Cys351, Cys353-Cys362, Cys369-Cys381, Cys375-Cys390, Cys392-Cys401, Cys408-Cys419, Cys413-Cys429, Cys431-Cys440, Cys462-Cys475, Cys469-Cys480, Cys482-Cys491, Cys507-Cys518, Cys512-Cys529, Cys531-Cys540, Cys547-Cys558, Cys552-Cys567, Cys569-Cys578, Cys586-Cys597, Cys591-Cys607, and Cys609-Cys618. Positions 365-402 (DKNECLSENMCLNNGTCVNLPGSFRCDCARGFGGKWCD) constitute an EGF-like 8; calcium-binding domain. Asn378 carries an N-linked (GlcNAc...) asparagine glycan. EGF-like domains are found at residues 404–441 (PLNMCQDFHCENDGTCMHTSDHSPVCQCKNGFIGKRCE), 449–492 (GGVR…NQCE), 503–541 (SENLCLSDPCMNNATCIDVDAHIGYACICKQGFEGDICE), 543–579 (HKDLCLENPCSNGGVCHQHRESFSCDCPPGFYGNGCE), and 582–619 (KMFRCLKSTCQNGGVCINEEEKGRKCECSYGFSGARCE). Residue Asn515 is glycosylated (N-linked (GlcNAc...) asparagine). Residue Asn623 is glycosylated (N-linked (GlcNAc...) asparagine). Cystine bridges form between Cys638/Cys661, Cys643/Cys656, Cys652/Cys668, Cys678/Cys702, Cys684/Cys697, Cys693/Cys709, Cys716/Cys742, Cys724/Cys737, and Cys733/Cys749. LNR repeat units follow at residues 638–674 (CEKRKCSERANDGNCDADCNYAACKFDGGDCSGKREP), 678–709 (CRYGNMCADFFANGVCNQACNNEECLYDGMDC), and 716–754 (CPVKIREHCASRFANGICDPECNTNGCGFDGGDCDNETN). Asn751, Asn754, and Asn900 each carry an N-linked (GlcNAc...) asparagine glycan. A helical transmembrane segment spans residues 909 to 931 (ALLLIGAGCLIVMVVLMLGALPG). The Cytoplasmic segment spans residues 932-1429 (NRTRKRRMIN…TRYSEPAHYF (498 aa)). Positions 933 to 952 (RTRKRRMINASVWMPPMENE) are RAM domain. 5 ANK repeats span residues 1093-1122 (DENTPLMLAVLARRRRLVAYLMKAGADPTI), 1126-1158 (SERSALHQAAANRDFGMMVYMLNSTKLKGDIEE), 1162-1194 (NGMTALMIVAHNEGRDQVASAKLLVEKGAKVDY), 1206-1236 (KGRTALHYAAQVSNMPIVKYLVGEKGSNKDK), and 1240-1269 (DGKTPIMLAAQEGRIEVVMYLIQQGASVEA). Residues 1308–1374 (IQHTHQPQPS…TTHTTPTSLN (67 aa)) are disordered. A compositionally biased stretch (basic residues) spans 1319-1330 (KVTRAPKKQTSR). Residues 1361–1374 (HFMNTTHTTPTSLN) show a composition bias toward polar residues.

It belongs to the NOTCH family. In terms of assembly, may interact with dsl-1. May interact with lag-2. May interact with osm-11. Interacts with sel-10. As to quaternary structure, when activated, the lin-12/Notch intracellular domain (NICD) can become a component of a complex consisting of at least the NICD, lag-1 and sel-8/lag-3. The NICD probably facilitates ordered assembly of the ternary complex via allosteric interactions of its RBP-j associated molecule (RAM) domain with lag-1. Upon binding its ligands, it is cleaved (S2 cleavage) in its extracellular domain, close to the transmembrane domain. S2 cleavage is probably mediated by the metalloproteases adm-4 and sup-17. It is then cleaved (S3 cleavage) downstream of its transmembrane domain, releasing it from the cell membrane; S3 cleavage requires a multiprotein gamma-secretase complex, which may include presenilin sel-12.

The protein resides in the apical cell membrane. It is found in the nucleus. Essential signaling protein which has a major role in many developmental processes; involved in cell fate decisions that require cell-cell interactions. Probable membrane-bound receptor for putative ligands lag-2, apx-1, dsl-1 and osm-11. Upon ligand activation, and releasing from the cell membrane, the lin-12/Notch intracellular domain (NICD) forms a transcriptional activator complex with lag-1 and lag-3 and regulates expression of various genes. Required for ventral cell fates in the postembryonic mesodermal lineage (M lineage) and in uterine precursor cells. Activity in cell fate decisions and tumorigenesis is negatively regulated by sel-10. Best known for involvement in cell-fate decisions during development, but also plays roles in other events. Regulates recovery from the dauer larval state. Modulates chemosensory avoidance of octanol and quiescence during molting. Promotes basement membrane mobility during tissue remodeling. Involved in establishing left-right asymmetry during intestinal organogenesis. This Caenorhabditis elegans protein is Protein lin-12.